Consider the following 201-residue polypeptide: Ubiquinone biosynthesis accessory factor UbiJ (201 aa).

In terms of domain architecture, SCP2 spans 15-112 (LNTFLYRSPA…QVVQNFVALA (98 aa)).

It belongs to the UbiJ family.

The protein localises to the cytoplasm. The protein operates within cofactor biosynthesis; ubiquinone biosynthesis. Functionally, required for ubiquinone (coenzyme Q) biosynthesis under aerobic conditions. Binds hydrophobic ubiquinone biosynthetic intermediates via its SCP2 domain and is essential for the stability of the Ubi complex. May constitute a docking platform where Ubi enzymes assemble and access their SCP2-bound polyprenyl substrates. Required for intracellular proliferation in macrophages. The polypeptide is Ubiquinone biosynthesis accessory factor UbiJ (Salmonella typhimurium (strain LT2 / SGSC1412 / ATCC 700720)).